A 91-amino-acid polypeptide reads, in one-letter code: Non-specific lipid-transfer protein 1 (91 aa).

4 cysteine pairs are disulfide-bonded: C3–C50, C13–C27, C28–C73, and C48–C87.

Belongs to the plant LTP family.

Its function is as follows. Plant non-specific lipid-transfer proteins transfer phospholipids as well as galactolipids across membranes. May play a role in wax or cutin deposition in the cell walls of expanding epidermal cells and certain secretory tissues. This is Non-specific lipid-transfer protein 1 from Prunus persica (Peach).